Consider the following 177-residue polypeptide: Large ribosomal subunit protein uL6 (177 aa).

It belongs to the universal ribosomal protein uL6 family. In terms of assembly, part of the 50S ribosomal subunit.

In terms of biological role, this protein binds to the 23S rRNA, and is important in its secondary structure. It is located near the subunit interface in the base of the L7/L12 stalk, and near the tRNA binding site of the peptidyltransferase center. This is Large ribosomal subunit protein uL6 from Methanococcoides burtonii (strain DSM 6242 / NBRC 107633 / OCM 468 / ACE-M).